We begin with the raw amino-acid sequence, 196 residues long: MPPPIGYCPAVGFGGRHERSDAELLAAHVAGDRYAFDQLFRRHHRQLHRLARLTSRTSEDADDALQDAMLSAHRGAGSFRYDAAVSSWLHRIVVNACLDRLRRAKAHPTAPLEDVYPVADRTAQVETAIAVQRALMRLPVEQRAAVVAVDMQGYSIADTARMLGVAEGTVKSRCARARARLARLLGYLNTGVNIRR.

The tract at residues 39 to 105 (LFRRHHRQLH…ACLDRLRRAK (67 aa)) is sigma-70 factor domain-2. A Polymerase core binding motif is present at residues 63–66 (DALQ). The interval 130–181 (AVQRALMRLPVEQRAAVVAVDMQGYSIADTARMLGVAEGTVKSRCARARARL) is sigma-70 factor domain-4. The segment at residues 156 to 175 (IADTARMLGVAEGTVKSRCA) is a DNA-binding region (H-T-H motif).

The protein belongs to the sigma-70 factor family. ECF subfamily. In terms of assembly, interacts transiently with the RNA polymerase catalytic core formed by RpoA, RpoB, RpoC and RpoZ (2 alpha, 1 beta, 1 beta' and 1 omega subunit) to form the RNA polymerase holoenzyme that can initiate transcription. Interacts (via sigma-70 factor domain-4) with anti-sigma-M factor RsmA (AC L7N5D7).

Sigma factors are initiation factors that promote the attachment of RNA polymerase to specific initiation sites and are then released. Extracytoplasmic function (ECF) sigma factors are held in an inactive form by an anti-sigma factor (RsaM, AC L7N5D7) until released by regulated intramembrane proteolysis. This sigma factor is required for the synthesis of surface or secreted molecules. The polypeptide is ECF RNA polymerase sigma factor SigM (sigM) (Mycobacterium tuberculosis (strain ATCC 25618 / H37Rv)).